Here is a 472-residue protein sequence, read N- to C-terminus: uncharacterized protein (472 aa).

14 consecutive transmembrane segments (helical) span residues 14-34 (VIVG…TLLI), 53-73 (WLTT…AFLI), 80-100 (ALLI…AFAP), 113-133 (AAGA…IFPI), 142-162 (MVGL…GWAV), 169-189 (SLFY…SILM), 202-222 (ILSV…FSSV), 227-247 (WSSS…LLFI), 263-283 (FTFG…ALLI), 302-322 (FDTG…SPII), 333-353 (GLAI…MQLT), 359-379 (AWIV…MMPV), 405-427 (VGGS…HAGT), and 437-457 (GMNA…LLSF).

It belongs to the major facilitator superfamily. EmrB family.

It localises to the cell membrane. This is an uncharacterized protein from Bacillus subtilis (strain 168).